Consider the following 103-residue polypeptide: Integration host factor subunit beta (103 aa).

It belongs to the bacterial histone-like protein family. As to quaternary structure, heterodimer of an alpha and a beta chain.

This protein is one of the two subunits of integration host factor, a specific DNA-binding protein that functions in genetic recombination as well as in transcriptional and translational control. The polypeptide is Integration host factor subunit beta (Bradyrhizobium sp. (strain BTAi1 / ATCC BAA-1182)).